The chain runs to 430 residues: Asparagine--tRNA ligase (430 aa).

Belongs to the class-II aminoacyl-tRNA synthetase family. As to quaternary structure, homodimer.

It is found in the cytoplasm. The enzyme catalyses tRNA(Asn) + L-asparagine + ATP = L-asparaginyl-tRNA(Asn) + AMP + diphosphate + H(+). The polypeptide is Asparagine--tRNA ligase (Staphylococcus aureus (strain USA300)).